A 115-amino-acid polypeptide reads, in one-letter code: UPF0342 protein Bsph_0375 (115 aa).

This sequence belongs to the UPF0342 family.

The protein is UPF0342 protein Bsph_0375 of Lysinibacillus sphaericus (strain C3-41).